A 364-amino-acid polypeptide reads, in one-letter code: 3-isopropylmalate dehydrogenase (364 aa).

Residue 79–92 (GPKWEHLPAAEQPE) participates in NAD(+) binding. Substrate-binding residues include R100, R110, R139, and D228. Positions 228, 252, and 256 each coordinate Mg(2+). 286-298 (GSAPDIAGKDIAN) is an NAD(+) binding site.

Belongs to the isocitrate and isopropylmalate dehydrogenases family. LeuB type 1 subfamily. As to quaternary structure, homodimer. It depends on Mg(2+) as a cofactor. The cofactor is Mn(2+).

It localises to the cytoplasm. The catalysed reaction is (2R,3S)-3-isopropylmalate + NAD(+) = 4-methyl-2-oxopentanoate + CO2 + NADH. It functions in the pathway amino-acid biosynthesis; L-leucine biosynthesis; L-leucine from 3-methyl-2-oxobutanoate: step 3/4. Catalyzes the oxidation of 3-carboxy-2-hydroxy-4-methylpentanoate (3-isopropylmalate) to 3-carboxy-4-methyl-2-oxopentanoate. The product decarboxylates to 4-methyl-2 oxopentanoate. This chain is 3-isopropylmalate dehydrogenase, found in Sodalis glossinidius (strain morsitans).